Here is a 314-residue protein sequence, read N- to C-terminus: Methionyl-tRNA formyltransferase (314 aa).

112 to 115 (SLLP) provides a ligand contact to (6S)-5,6,7,8-tetrahydrofolate.

This sequence belongs to the Fmt family.

The catalysed reaction is L-methionyl-tRNA(fMet) + (6R)-10-formyltetrahydrofolate = N-formyl-L-methionyl-tRNA(fMet) + (6S)-5,6,7,8-tetrahydrofolate + H(+). Attaches a formyl group to the free amino group of methionyl-tRNA(fMet). The formyl group appears to play a dual role in the initiator identity of N-formylmethionyl-tRNA by promoting its recognition by IF2 and preventing the misappropriation of this tRNA by the elongation apparatus. This Buchnera aphidicola subsp. Acyrthosiphon pisum (strain 5A) protein is Methionyl-tRNA formyltransferase.